Reading from the N-terminus, the 393-residue chain is uncharacterized protein (393 aa).

Positions 250 to 389 constitute a Flavodoxin-like domain; sequence AVIVYDTMYN…KCYEFGKRLA (140 aa).

This is an uncharacterized protein from Methanocaldococcus jannaschii (strain ATCC 43067 / DSM 2661 / JAL-1 / JCM 10045 / NBRC 100440) (Methanococcus jannaschii).